Consider the following 362-residue polypeptide: Chorismate synthase (362 aa).

Residue Arg-47 coordinates NADP(+). FMN is bound by residues 124 to 126 (RAS), Gly-286, 301 to 305 (KPTAT), and Arg-327.

It belongs to the chorismate synthase family. As to quaternary structure, homotetramer. Requires FMNH2 as cofactor.

It catalyses the reaction 5-O-(1-carboxyvinyl)-3-phosphoshikimate = chorismate + phosphate. The protein operates within metabolic intermediate biosynthesis; chorismate biosynthesis; chorismate from D-erythrose 4-phosphate and phosphoenolpyruvate: step 7/7. Its function is as follows. Catalyzes the anti-1,4-elimination of the C-3 phosphate and the C-6 proR hydrogen from 5-enolpyruvylshikimate-3-phosphate (EPSP) to yield chorismate, which is the branch point compound that serves as the starting substrate for the three terminal pathways of aromatic amino acid biosynthesis. This reaction introduces a second double bond into the aromatic ring system. In Synechococcus sp. (strain WH7803), this protein is Chorismate synthase.